Here is a 363-residue protein sequence, read N- to C-terminus: Histidinol-phosphate aminotransferase (363 aa).

Lys215 bears the N6-(pyridoxal phosphate)lysine mark.

Belongs to the class-II pyridoxal-phosphate-dependent aminotransferase family. Histidinol-phosphate aminotransferase subfamily. Homodimer. Pyridoxal 5'-phosphate is required as a cofactor.

The catalysed reaction is L-histidinol phosphate + 2-oxoglutarate = 3-(imidazol-4-yl)-2-oxopropyl phosphate + L-glutamate. It participates in amino-acid biosynthesis; L-histidine biosynthesis; L-histidine from 5-phospho-alpha-D-ribose 1-diphosphate: step 7/9. The chain is Histidinol-phosphate aminotransferase from Buchnera aphidicola subsp. Diuraphis noxia.